The chain runs to 313 residues: Proline-rich protein 3 (313 aa).

The signal sequence occupies residues 1 to 22 (MAITRSSLAICLILSLVTITTA). The interval 27-312 (PSSPPVYKSP…GPKAAPATPK (286 aa)) is 35 X 5 AA approximate repeats. 35 tandem repeats follow at residues 30–34 (PPVYK), 35–39 (SPEHK), 40–43 (PTLP), 44–48 (SPVYT), 49–53 (PPVYK), 54–57 (PTLS), 58–62 (PPVYT), 64–67 (PTIP), 68–72 (PPVYT), 73–77 (PPVYK), 82–86 (PPVYT), 87–91 (KPTIP), 92–96 (PPVYT), 97–101 (PPVYK), 102–105 (PTLS), 106–110 (PPVYT), 111–115 (KPTIP), 116–120 (PPVYT), 121–125 (PPVYK), 126–131 (PTPVYT), 132–136 (KPTIP), 137–141 (PPVYT), 142–146 (PPVYK), 147–150 (PTPS), 151–155 (PPVYK), 157–163 (SPSYSSP), 164–168 (PPPYV), 169–174 (PKPTYT), 175–181 (PTTKPYV), 182–186 (PEILK), 187–229 (AVDG…VIYS), 258–262 (SPVET), 266–270 (PTNVN), 298–302 (PFYYT), and 308–312 (PATPK).

Belongs to the plant proline-rich protein superfamily. ENOD12 family. Exclusively expressed in roots, particularly in root hairs-containing regions, and especially in root hairs.

The protein localises to the secreted. The protein resides in the cell wall. Its function is as follows. May contribute to cell wall structure in root hairs. The chain is Proline-rich protein 3 (PRP3) from Arabidopsis thaliana (Mouse-ear cress).